A 154-amino-acid chain; its full sequence is uncharacterized protein (154 aa).

Residues 23 to 43 (SAVALVTFAGAALSGVIPAIA) form a helical membrane-spanning segment.

The protein resides in the membrane. This is an uncharacterized protein from Mycobacterium tuberculosis (strain CDC 1551 / Oshkosh).